We begin with the raw amino-acid sequence, 899 residues long: Valine--tRNA ligase (899 aa).

The short motif at 60 to 70 is the 'HIGH' region element; that stretch reads PNVTGVLHMGH. Positions 539–543 match the 'KMSKS' region motif; the sequence is KMSKS. Lysine 542 lines the ATP pocket. Positions 827–898 form a coiled coil; that stretch reads AGLIDLDEEQ…KQGLEKLAAL (72 aa).

Belongs to the class-I aminoacyl-tRNA synthetase family. ValS type 1 subfamily. As to quaternary structure, monomer.

The protein resides in the cytoplasm. It catalyses the reaction tRNA(Val) + L-valine + ATP = L-valyl-tRNA(Val) + AMP + diphosphate. Its function is as follows. Catalyzes the attachment of valine to tRNA(Val). As ValRS can inadvertently accommodate and process structurally similar amino acids such as threonine, to avoid such errors, it has a 'posttransfer' editing activity that hydrolyzes mischarged Thr-tRNA(Val) in a tRNA-dependent manner. The protein is Valine--tRNA ligase of Syntrophotalea carbinolica (strain DSM 2380 / NBRC 103641 / GraBd1) (Pelobacter carbinolicus).